The sequence spans 557 residues: Putative sensory transducer protein (557 aa).

Residues 122–145 (TASTVMIVVIFVGILIAIALGVFI) traverse the membrane as a helical segment. The HAMP domain maps to 147–199 (RIISKPIGQMVEAADRLALGDVEVDVKAETRDEIGKLAESFKRMIENIREQAY). Residues 243 to 472 (VAAQVAAGAK…ESAAASEELS (230 aa)) enclose the Methyl-accepting transducer domain. Residue Gln268 is modified to Glutamate methyl ester (Gln). Glu274 carries the glutamate methyl ester (Glu) modification. Gln281 is modified (glutamate methyl ester (Gln)). Glu463 bears the Glutamate methyl ester (Glu) mark. Over residues 511 to 541 (DYTENKQPKSYSKEENGEYSDGKETAEKDVG) the composition is skewed to basic and acidic residues. Residues 511-542 (DYTENKQPKSYSKEENGEYSDGKETAEKDVGG) are disordered.

It belongs to the methyl-accepting chemotaxis (MCP) protein family.

It localises to the cell membrane. Functionally, may bind attractants or detect changes in the extracellular concentration of soluble sugars. This is Putative sensory transducer protein from Acetivibrio thermocellus (strain ATCC 27405 / DSM 1237 / JCM 9322 / NBRC 103400 / NCIMB 10682 / NRRL B-4536 / VPI 7372) (Clostridium thermocellum).